The primary structure comprises 205 residues: Rho-related GTP-binding protein RhoQ (205 aa).

Gly16 to Thr23 contributes to the GTP binding site. The Effector region signature appears at Tyr38 to Tyr46. GTP is bound by residues Asp63–Gln67 and Thr121–Asp124. Cysteine methyl ester is present on Cys202. The S-farnesyl cysteine moiety is linked to residue Cys202. Residues Leu203 to Thr205 constitute a propeptide, removed in mature form.

Belongs to the small GTPase superfamily. Rho family. As to quaternary structure, interacts with CDC42EP4 in a GTP-dependent manner. Interacts with ARHGAP33/TCGAP. Interacts with CDC42EP1, CDC42EP2, CDC42EP3, PARD6A, PARD6G (and probably PARD6B) in a GTP-dependent manner. Part of a quaternary complex containing PARD3, some PARD6 protein (PARD6A, PARD6B or PARD6G) and some atypical PKC protein (PRKCI or PRKCZ). Interacts with EXO70 in a GTP-dependent manner. Interacts with GOPC. In terms of processing, may be post-translationally modified by both palmitoylation and polyisoprenylation.

Its subcellular location is the cytoplasm. It is found in the cell membrane. Its activity is regulated as follows. Regulated by guanine nucleotide exchange factors (GEFs) which promote the exchange of bound GDP for free GTP, GTPase activating proteins (GAPs) which increase the GTP hydrolysis activity, and GDP dissociation inhibitors which inhibit the dissociation of the nucleotide from the GTPase. Plasma membrane-associated small GTPase which cycles between an active GTP-bound and an inactive GDP-bound state. In active state binds to a variety of effector proteins to regulate cellular responses. Involved in epithelial cell polarization processes. May play a role in CFTR trafficking to the plasma membrane. Causes the formation of thin, actin-rich surface projections called filopodia. This Homo sapiens (Human) protein is Rho-related GTP-binding protein RhoQ (RHOQ).